The chain runs to 131 residues: Sirohydrochlorin cobaltochelatase (131 aa).

Residue histidine 12 is the Proton acceptor of the active site. Residues histidine 12 and histidine 78 each contribute to the Co(2+) site. Ni(2+)-binding residues include histidine 12 and histidine 78. A substrate-binding site is contributed by 73-78 (LASGVH).

Belongs to the CbiX family. CbiXS subfamily. Homotetramer; dimer of dimers.

It carries out the reaction Co-sirohydrochlorin + 2 H(+) = sirohydrochlorin + Co(2+). The enzyme catalyses Ni-sirohydrochlorin + 2 H(+) = sirohydrochlorin + Ni(2+). It functions in the pathway cofactor biosynthesis; adenosylcobalamin biosynthesis; cob(II)yrinate a,c-diamide from sirohydrochlorin (anaerobic route): step 1/10. Catalyzes the insertion of Co(2+) into sirohydrochlorin as part of the anaerobic pathway to cobalamin biosynthesis. Involved in the biosynthesis of the unique nickel-containing tetrapyrrole coenzyme F430, the prosthetic group of methyl-coenzyme M reductase (MCR), which plays a key role in methanogenesis and anaerobic methane oxidation. Catalyzes the insertion of Ni(2+) into sirohydrochlorin to yield Ni-sirohydrochlorin. This chain is Sirohydrochlorin cobaltochelatase, found in Methanococcoides burtonii (strain DSM 6242 / NBRC 107633 / OCM 468 / ACE-M).